Reading from the N-terminus, the 389-residue chain is E3 ubiquitin-protein ligase E3D (389 aa).

Ala2 bears the N-acetylalanine mark. Positions 129-159 (PLPSENWGALVGEWCCHPDPFANKPLHPQEN) match the BRAT1-like motif motif. Cys144 provides a ligand contact to Zn(2+). The interaction with UBE2C stretch occupies residues 235-257 (QSSERSFPIIPRPRFVQSVIAQC). The HECT-like stretch occupies residues 353–389 (LPSATCLELLLILSKSNANLPSSLRHMNSFQVAFLKI).

Interacts with UBE2C/UbcH10 (E2 ubiquitin-conjugating enzyme). In vitro, interacts with cyclin-B. Post-translationally, ubiquitinated by UBCH10 (E2 ubiquitin-conjugating enzyme).

It is found in the cytoplasm. It catalyses the reaction S-ubiquitinyl-[E2 ubiquitin-conjugating enzyme]-L-cysteine + [acceptor protein]-L-lysine = [E2 ubiquitin-conjugating enzyme]-L-cysteine + N(6)-ubiquitinyl-[acceptor protein]-L-lysine.. Its pathway is protein modification; protein ubiquitination. Its function is as follows. E3 ubiquitin-protein ligase which accepts ubiquitin from specific E2 ubiquitin-conjugating enzymes, and transfers it to substrates, generally promoting their degradation by the proteasome. Independently of its E3 ubiquitin-protein ligase activity, acts as an inhibitor of CPSF3 endonuclease activity by blocking CPSF3 active site. The protein is E3 ubiquitin-protein ligase E3D (UBE3D) of Pongo abelii (Sumatran orangutan).